The following is a 378-amino-acid chain: Putative F-box protein At5g51000 (378 aa).

The region spanning 1–47 (MSTMSDLFPDLVEEILSRVPITSLKAVKLTCKQWNDLSKDSSFTKNH) is the F-box domain.

This Arabidopsis thaliana (Mouse-ear cress) protein is Putative F-box protein At5g51000.